Here is a 167-residue protein sequence, read N- to C-terminus: RNA pyrophosphohydrolase (167 aa).

The Nudix hydrolase domain occupies 8–159; sequence PYRTCVGVML…KRPVYERVVK (152 aa). The short motif at 47–68 is the Nudix box element; that stretch reads GGVDPGEDTWAAAKRELYEETS.

It belongs to the Nudix hydrolase family. RppH subfamily. A divalent metal cation is required as a cofactor.

Functionally, accelerates the degradation of transcripts by removing pyrophosphate from the 5'-end of triphosphorylated RNA, leading to a more labile monophosphorylated state that can stimulate subsequent ribonuclease cleavage. This Bradyrhizobium diazoefficiens (strain JCM 10833 / BCRC 13528 / IAM 13628 / NBRC 14792 / USDA 110) protein is RNA pyrophosphohydrolase.